Consider the following 444-residue polypeptide: P2X purinoceptor 5 (444 aa).

The Cytoplasmic segment spans residues 1–30 (MGQAGCKGLCLSLFDYKTEKYVIAKNKKVG). The chain crosses the membrane as a helical span at residues 31-51 (LLYRLLQASILAYLVVWVFLI). The Extracellular portion of the chain corresponds to 52–319 (KKGYQDVDTS…RTLMKAYGIR (268 aa)). N-linked (GlcNAc...) asparagine glycosylation is present at Asn77. 3 disulfides stabilise this stretch: Cys118-Cys169, Cys129-Cys152, and Cys135-Cys163. N-linked (GlcNAc...) asparagine glycosylation occurs at Asn202. 2 disulfides stabilise this stretch: Cys220/Cys229 and Cys263/Cys272. Residues 320–362 (FDVMVNGKAGKFSIIPTIINVGSGVALMGAGAFFCDLVLIYLI) traverse the membrane as a helical segment. Over 363–444 (KKREFYRDKK…PQLLEPHRST (82 aa)) the chain is Cytoplasmic. The tract at residues 378–444 (GLEDSSQEAE…PQLLEPHRST (67 aa)) is disordered.

It belongs to the P2X receptor family. In terms of assembly, functional P2XRs are organized as homomeric and heteromeric trimers. Homotrimer. Forms heterotrimer with P2RX1. In terms of tissue distribution, expressed at high levels in brain and immune system.

It localises to the cell membrane. It carries out the reaction Na(+)(in) = Na(+)(out). It catalyses the reaction Ca(2+)(in) = Ca(2+)(out). The enzyme catalyses chloride(in) = chloride(out). Activated by ATP. Slowly desensitizing. Sensitive to the ATP agonist alpha/beta-methylene-ATP. Its function is as follows. ATP-gated nonselective transmembrane cation channel permeable to potassium, sodium and calcium. Unlike other P2RX receptors, the P2X5 receptor is also permeable to chloride. May play a supporting role in the inflammatory response. Functionally, non-functional. The polypeptide is P2X purinoceptor 5 (Homo sapiens (Human)).